We begin with the raw amino-acid sequence, 422 residues long: Serine--tRNA ligase (422 aa).

Residue 238–240 (TSE) participates in L-serine binding. Residue 269–271 (RKE) participates in ATP binding. L-serine is bound at residue Glu292. 356–359 (EISS) provides a ligand contact to ATP. Residue Ser390 participates in L-serine binding.

This sequence belongs to the class-II aminoacyl-tRNA synthetase family. Type-1 seryl-tRNA synthetase subfamily. Homodimer. The tRNA molecule binds across the dimer.

It localises to the cytoplasm. It carries out the reaction tRNA(Ser) + L-serine + ATP = L-seryl-tRNA(Ser) + AMP + diphosphate + H(+). It catalyses the reaction tRNA(Sec) + L-serine + ATP = L-seryl-tRNA(Sec) + AMP + diphosphate + H(+). Its pathway is aminoacyl-tRNA biosynthesis; selenocysteinyl-tRNA(Sec) biosynthesis; L-seryl-tRNA(Sec) from L-serine and tRNA(Sec): step 1/1. In terms of biological role, catalyzes the attachment of serine to tRNA(Ser). Is also able to aminoacylate tRNA(Sec) with serine, to form the misacylated tRNA L-seryl-tRNA(Sec), which will be further converted into selenocysteinyl-tRNA(Sec). The protein is Serine--tRNA ligase of Helicobacter hepaticus (strain ATCC 51449 / 3B1).